The chain runs to 177 residues: B-phycoerythrin beta chain (177 aa).

(2R,3E)-phycoerythrobilin contacts are provided by residues K28, N35, D39, C50, D54, C61, N72, 77–78, C82, R129, 147–148, 154–158, and C158; these read RR, SQ, and PQGDC. N72 is modified (N4-methylasparagine).

The protein belongs to the phycobiliprotein family. In terms of assembly, heterotetramer of 2 different alpha chains and 2 identical beta chains. The subunit composition could comprise any combination of 2 out of 4 different alpha units with an invariant beta unit. In terms of processing, contains three covalently linked phycoerythrobilin chromophores.

It localises to the plastid. The protein resides in the chloroplast thylakoid membrane. Light-harvesting photosynthetic tetrapyrrole chromophore-protein from the phycobiliprotein complex. In Rhodomonas sp. (strain CS 24) (Chroomonas sp. (strain CS24)), this protein is B-phycoerythrin beta chain (cpeB).